Here is a 357-residue protein sequence, read N- to C-terminus: Arginine kinase (357 aa).

Residues 9-91 (KLEAGFKKLQ…FDPIIDDYHG (83 aa)) enclose the Phosphagen kinase N-terminal domain. 64–68 (GVGIY) contacts substrate. Positions 119–356 (FIISTRVRCG…LEMIKMEKAA (238 aa)) constitute a Phosphagen kinase C-terminal domain. ATP-binding positions include 122–126 (STRVR) and H185. E225 contacts substrate. ATP is bound at residue R229. Residue C271 coordinates substrate. ATP contacts are provided by residues 280 to 284 (RASVH) and 309 to 314 (RGTRGE). E314 contacts substrate.

It belongs to the ATP:guanido phosphotransferase family. As to quaternary structure, monomer.

Its subcellular location is the cytoplasm. The enzyme catalyses L-arginine + ATP = N(omega)-phospho-L-arginine + ADP + H(+). In terms of biological role, catalyzes the reversible transfer of the terminal phosphoryl group of ATP to L-arginine. The chain is Arginine kinase from Limulus polyphemus (Atlantic horseshoe crab).